The following is a 955-amino-acid chain: Iron-responsive element-binding protein 2 (955 aa).

The [4Fe-4S] cluster site is built by C504, C570, and C573.

This sequence belongs to the aconitase/IPM isomerase family. [4Fe-4S] cluster serves as cofactor. In terms of processing, ubiquitinated and degraded by the proteasome in presence of high level of iron and oxygen.

The protein resides in the cytoplasm. Functionally, RNA-binding protein that binds to iron-responsive elements (IRES), which are stem-loop structures found in the 5'-UTR of ferritin, and delta aminolevulinic acid synthase mRNAs, and in the 3'-UTR of transferrin receptor mRNA. Binding to the IRE element in ferritin results in the repression of its mRNA translation. Binding of the protein to the transferrin receptor mRNA inhibits the degradation of this otherwise rapidly degraded mRNA. The sequence is that of Iron-responsive element-binding protein 2 (ireb2) from Xenopus laevis (African clawed frog).